The chain runs to 632 residues: RNA-binding post-transcriptional regulator csx1 (632 aa).

Residues Ser-42 and Ser-54 each carry the phosphoserine; by MAPK sty1 modification. A phosphoserine mark is found at Ser-67 and Ser-69. 2 RRM domains span residues Asp-85–Gly-167 and Phe-182–Pro-261. Phosphoserine; by MAPK sty1 is present on Ser-291. The RRM 3 domain occupies Thr-297–Asn-369. Ser-455 is subject to Phosphoserine; by MAPK sty1. Residues Pro-456–Leu-476 are disordered. Over residues Ser-466–Leu-476 the composition is skewed to low complexity.

Interacts with cip1 and cip2.

It is found in the cytoplasm. Its function is as follows. Regulates global gene expression after oxidative stress. Interacts and stabilizes atf1 and pcr1 mRNAs after oxidative stress, thus controlling their turnover. The polypeptide is RNA-binding post-transcriptional regulator csx1 (csx1) (Schizosaccharomyces pombe (strain 972 / ATCC 24843) (Fission yeast)).